Reading from the N-terminus, the 471-residue chain is Glutamate--tRNA ligase (471 aa).

The 'HIGH' region motif lies at 9 to 19 (PSPTGYLHVGG). Zn(2+) is bound by residues cysteine 98, cysteine 100, cysteine 125, and histidine 127. The 'KMSKS' region motif lies at 237 to 241 (KLSKR). Lysine 240 is an ATP binding site.

Belongs to the class-I aminoacyl-tRNA synthetase family. Glutamate--tRNA ligase type 1 subfamily. Monomer. It depends on Zn(2+) as a cofactor.

The protein resides in the cytoplasm. It carries out the reaction tRNA(Glu) + L-glutamate + ATP = L-glutamyl-tRNA(Glu) + AMP + diphosphate. Catalyzes the attachment of glutamate to tRNA(Glu) in a two-step reaction: glutamate is first activated by ATP to form Glu-AMP and then transferred to the acceptor end of tRNA(Glu). This Salmonella choleraesuis (strain SC-B67) protein is Glutamate--tRNA ligase.